A 456-amino-acid chain; its full sequence is Bifunctional protein GlmU (456 aa).

A pyrophosphorylase region spans residues 1-229; the sequence is MSSHAMSVVI…LSEVEGVNNR (229 aa). Residues 11 to 14, lysine 25, glutamine 76, 81 to 82, 103 to 105, glycine 140, glutamate 154, asparagine 169, and asparagine 227 contribute to the UDP-N-acetyl-alpha-D-glucosamine site; these read LAAG, GT, and YGD. A Mg(2+)-binding site is contributed by aspartate 105. Asparagine 227 serves as a coordination point for Mg(2+). The interval 230–250 is linker; that stretch reads LQLARLEHVYQAEQAEKLLLA. The tract at residues 251-456 is N-acetyltransferase; that stretch reads GVMLRDPARF…QGWRRPVKKK (206 aa). Residues arginine 333 and lysine 351 each contribute to the UDP-N-acetyl-alpha-D-glucosamine site. The Proton acceptor role is filled by histidine 363. UDP-N-acetyl-alpha-D-glucosamine contacts are provided by tyrosine 366 and asparagine 377. Acetyl-CoA contacts are provided by residues alanine 380, 386-387, serine 405, alanine 423, and arginine 440; that span reads NY.

In the N-terminal section; belongs to the N-acetylglucosamine-1-phosphate uridyltransferase family. The protein in the C-terminal section; belongs to the transferase hexapeptide repeat family. As to quaternary structure, homotrimer. The cofactor is Mg(2+).

The protein localises to the cytoplasm. The enzyme catalyses alpha-D-glucosamine 1-phosphate + acetyl-CoA = N-acetyl-alpha-D-glucosamine 1-phosphate + CoA + H(+). The catalysed reaction is N-acetyl-alpha-D-glucosamine 1-phosphate + UTP + H(+) = UDP-N-acetyl-alpha-D-glucosamine + diphosphate. It functions in the pathway nucleotide-sugar biosynthesis; UDP-N-acetyl-alpha-D-glucosamine biosynthesis; N-acetyl-alpha-D-glucosamine 1-phosphate from alpha-D-glucosamine 6-phosphate (route II): step 2/2. Its pathway is nucleotide-sugar biosynthesis; UDP-N-acetyl-alpha-D-glucosamine biosynthesis; UDP-N-acetyl-alpha-D-glucosamine from N-acetyl-alpha-D-glucosamine 1-phosphate: step 1/1. It participates in bacterial outer membrane biogenesis; LPS lipid A biosynthesis. Its function is as follows. Catalyzes the last two sequential reactions in the de novo biosynthetic pathway for UDP-N-acetylglucosamine (UDP-GlcNAc). The C-terminal domain catalyzes the transfer of acetyl group from acetyl coenzyme A to glucosamine-1-phosphate (GlcN-1-P) to produce N-acetylglucosamine-1-phosphate (GlcNAc-1-P), which is converted into UDP-GlcNAc by the transfer of uridine 5-monophosphate (from uridine 5-triphosphate), a reaction catalyzed by the N-terminal domain. The protein is Bifunctional protein GlmU of Cronobacter sakazakii (strain ATCC BAA-894) (Enterobacter sakazakii).